We begin with the raw amino-acid sequence, 127 residues long: Small ribosomal subunit protein bS6 (127 aa).

Positions 96–127 (VTTPSPMMKEEKSRSLTPAAGDEGKPAEAAEA) are disordered. Positions 117–127 (DEGKPAEAAEA) are enriched in basic and acidic residues.

The protein belongs to the bacterial ribosomal protein bS6 family.

Its function is as follows. Binds together with bS18 to 16S ribosomal RNA. The polypeptide is Small ribosomal subunit protein bS6 (Azoarcus sp. (strain BH72)).